The chain runs to 825 residues: MDESALTLGTIDVSYLPNSSEYSIGRCKHATEEWGECGSRPTVFRSATLKWKESLMSRKRPFVGRCCYSCTPQSWDKFFNPSIPSLGLRNVIYINETHTRHRGWLARRLSYVLFIQERDVHKGMFATNVTENVLNSSRVQEAIAEVAGELNPDGSAQQQSKAVNKVKKKARKILQEMVATVSPAMIRLTGWVLLKLFNSFFWNIQIHKGQLEMVKAATETNLPLIFLPVHRSHIDYLLLTFILFCHNIKAPYIASGNNLNIPIFSTLIHKLGGFFIRRRLDETPDGRKDILYRALLHGHIVELLRQQQFLEIFLEGTRSRSGKISCARAGLLSVVVDTLSTNTIPDILIIPGGISYDRIIEGHYNGEQLGKPKKNESLWSIARGVIRMLRKNYGCVKTDFAQPFSLKEYLESQSQKPVSAPLSLEQALLPAILPSRPSGAADEGTDMSINESRNATDESRRRLIAHLAEHILFTASKSCAIMSTHIVACLLLYRHRQGIGLFTLVEDFFVMKEEVLARDFDLGFSGNSEDVVMHAIQFLGNCITITHTSKNDEFFITPSTTIPSVFELNFYSNGVLHVFIMEAIIACSLYAVLKKRGPGGPASPSLVSQEQLVHKAASLCYLLSNEGTISLPCQTFYQICHETVGRFIQYGILIVAEQDDQEDISPGLAEQQWDKKLPEPLSWRSDEEDEDSDFGEEQRDCYLKVSQSKEHQQFITFLQRLLGPLLEAYSSAAVFIHNFGGPVPEPEFLQKLHKYLITRTERRVAVYAESATYCLVKNAVKTFKDIGVFKETKQKRVSGLELSNTFLPQCNRQKLLEYILSLVVL.

The Cytoplasmic segment spans residues 1 to 87 (MDESALTLGT…FFNPSIPSLG (87 aa)). The interval 80–120 (NPSIPSLGLRNVIYINETHTRHRGWLARRLSYVLFIQERDV) is important for mitochondrial localization. An intramembrane segment occupies 88–118 (LRNVIYINETHTRHRGWLARRLSYVLFIQER). At 119 to 825 (DVHKGMFATN…LEYILSLVVL (707 aa)) the chain is on the cytoplasmic side. The HXXXXD motif signature appears at 230–235 (HRSHID). The CoA site is built by Arg-278, Arg-279, Lys-288, Arg-293, and Arg-328. Ser-380 is subject to Phosphoserine. The tract at residues 435-455 (SRPSGAADEGTDMSINESRNA) is disordered. Arg-461 is a CoA binding site. A phosphoserine mark is found at Ser-685 and Ser-692. N6-acetyllysine is present on residues Lys-777 and Lys-781.

This sequence belongs to the GPAT/DAPAT family. In terms of tissue distribution, highly expressed in adipose tissues and lung. Low expression in liver.

It is found in the mitochondrion outer membrane. The enzyme catalyses sn-glycerol 3-phosphate + an acyl-CoA = a 1-acyl-sn-glycero-3-phosphate + CoA. The catalysed reaction is (9Z,12Z)-octadecadienoyl-CoA + sn-glycerol 3-phosphate = 1-(9Z,12Z)-octadecadienoyl-sn-glycero-3-phosphate + CoA. It catalyses the reaction sn-glycerol 3-phosphate + (9Z)-octadecenoyl-CoA = 1-(9Z-octadecenoyl)-sn-glycero-3-phosphate + CoA. It carries out the reaction sn-glycerol 3-phosphate + octadecanoyl-CoA = 1-octadecanoyl-sn-glycero-3-phosphate + CoA. The enzyme catalyses sn-glycerol 3-phosphate + hexadecanoyl-CoA = 1-hexadecanoyl-sn-glycero-3-phosphate + CoA. The catalysed reaction is dodecanoyl-CoA + sn-glycerol 3-phosphate = 1-dodecanoyl-sn-glycerol 3-phosphate + CoA. It catalyses the reaction 1-acyl-sn-glycero-3-phospho-(1'-sn-glycerol) + an acyl-CoA = a 1,2-diacyl-sn-glycero-3-phospho-(1'-sn-glycerol) + CoA. It participates in phospholipid metabolism; CDP-diacylglycerol biosynthesis; CDP-diacylglycerol from sn-glycerol 3-phosphate: step 1/3. Functionally, mitochondrial membrane protein that catalyzes the essential first step of biosynthesis of glycerolipids such as triglycerides, phosphatidic acids and lysophosphatidic acids. Esterifies acyl-group from acyl-coenzyme A (acyl-CoA) to the sn-1 position of glycerol-3-phosphate, to produce lysophosphatidic acid. Has a narrow hydrophobic binding cleft that selects for a linear acyl chain. Catalytic activity is higher for substrates with a 16-carbon acyl chain. The chain is Glycerol-3-phosphate acyltransferase 1, mitochondrial from Bos taurus (Bovine).